A 185-amino-acid polypeptide reads, in one-letter code: Peptidoglycan-recognition protein SC1a (185 aa).

A signal peptide spans 1–21 (MVSKVALLLAVLVCSQYMAQG). In terms of domain architecture, N-acetylmuramoyl-L-alanine amidase spans 46–170 (SYAIIHHTAG…RQVSATECPG (125 aa)). His-51 lines the Zn(2+) pocket. Cys-58 and Cys-64 are joined by a disulfide. Residues His-160 and Cys-168 each contribute to the Zn(2+) site.

It belongs to the N-acetylmuramoyl-L-alanine amidase 2 family. Zn(2+) serves as cofactor.

The protein localises to the secreted. The catalysed reaction is Hydrolyzes the link between N-acetylmuramoyl residues and L-amino acid residues in certain cell-wall glycopeptides.. N-acetylmuramyl-L-alanine amidase involved in innate immunity by degrading bacterial peptidoglycans (PGN). Plays a scavenger role by digesting biologically active PGN into biologically inactive fragments. Has no direct bacteriolytic activity. The chain is Peptidoglycan-recognition protein SC1a from Drosophila melanogaster (Fruit fly).